The chain runs to 380 residues: Cytochrome b (380 aa).

Transmembrane regions (helical) follow at residues Phe34–Met54, Trp78–Ile99, Trp114–Leu134, and Phe179–Met199. Heme b is bound by residues His84 and His98. The heme b site is built by His183 and His197. An a ubiquinone-binding site is contributed by His202. 4 consecutive transmembrane segments (helical) span residues Leu227–Ser247, Leu289–His309, Leu321–Ser341, and Phe348–Pro368.

Belongs to the cytochrome b family. As to quaternary structure, the cytochrome bc1 complex contains 11 subunits: 3 respiratory subunits (MT-CYB, CYC1 and UQCRFS1), 2 core proteins (UQCRC1 and UQCRC2) and 6 low-molecular weight proteins (UQCRH/QCR6, UQCRB/QCR7, UQCRQ/QCR8, UQCR10/QCR9, UQCR11/QCR10 and a cleavage product of UQCRFS1). This cytochrome bc1 complex then forms a dimer. The cofactor is heme b.

Its subcellular location is the mitochondrion inner membrane. Functionally, component of the ubiquinol-cytochrome c reductase complex (complex III or cytochrome b-c1 complex) that is part of the mitochondrial respiratory chain. The b-c1 complex mediates electron transfer from ubiquinol to cytochrome c. Contributes to the generation of a proton gradient across the mitochondrial membrane that is then used for ATP synthesis. The polypeptide is Cytochrome b (MT-CYB) (Crossoptilon crossoptilon (White-eared pheasant)).